A 493-amino-acid polypeptide reads, in one-letter code: Maintenance of mitochondrial morphology protein 1 (493 aa).

The Lumenal portion of the chain corresponds to 1-23; sequence MSQHSQYGVPGVPAQSSLSFTQG. Residues 24 to 44 form a helical membrane-spanning segment; that stretch reads FLLGQLSVVLLIGAFIKFFIF. The Cytoplasmic portion of the chain corresponds to 45–493; the sequence is GEAPAPPSRG…GSMPRVVRTP (449 aa). Residues 52 to 104 are disordered; the sequence is SRGLASRTASHHRSYSINQGDNNANNNTNNGSSPRTLREKPSTSNVLRPVPSS. Residues 69-81 are compositionally biased toward low complexity; it reads NQGDNNANNNTNN. Residues 93–104 show a composition bias toward polar residues; it reads STSNVLRPVPSS. The SMP-LTD domain maps to 140–391; sequence QPESLDWFNV…EPRVQVVGLP (252 aa). A disordered region spans residues 420–493; the sequence is SSRSGGGPVE…GSMPRVVRTP (74 aa).

This sequence belongs to the MMM1 family. As to quaternary structure, homodimer. Component of the ER-mitochondria encounter structure (ERMES) or MDM complex, composed of mmm1, mdm10, mdm12 and mdm34. A mmm1 homodimer associates with one molecule of mdm12 on each side in a pairwise head-to-tail manner, and the SMP-LTD domains of mmm1 and mdm12 generate a continuous hydrophobic tunnel for phospholipid trafficking.

It is found in the endoplasmic reticulum membrane. Functionally, component of the ERMES/MDM complex, which serves as a molecular tether to connect the endoplasmic reticulum (ER) and mitochondria. Components of this complex are involved in the control of mitochondrial shape and protein biogenesis, and function in nonvesicular lipid trafficking between the ER and mitochondria. The mdm12-mmm1 subcomplex functions in the major beta-barrel assembly pathway that is responsible for biogenesis of all outer membrane beta-barrel proteins, and acts in a late step after the SAM complex. The mdm10-mdm12-mmm1 subcomplex further acts in the TOM40-specific pathway after the action of the mdm12-mmm1 complex. Essential for establishing and maintaining the structure of mitochondria and maintenance of mtDNA nucleoids. The sequence is that of Maintenance of mitochondrial morphology protein 1 from Talaromyces stipitatus (strain ATCC 10500 / CBS 375.48 / QM 6759 / NRRL 1006) (Penicillium stipitatum).